A 233-amino-acid chain; its full sequence is Putative N-acetylmannosamine-6-phosphate 2-epimerase (233 aa).

Belongs to the NanE family.

It catalyses the reaction an N-acyl-D-glucosamine 6-phosphate = an N-acyl-D-mannosamine 6-phosphate. The protein operates within amino-sugar metabolism; N-acetylneuraminate degradation; D-fructose 6-phosphate from N-acetylneuraminate: step 3/5. In terms of biological role, converts N-acetylmannosamine-6-phosphate (ManNAc-6-P) to N-acetylglucosamine-6-phosphate (GlcNAc-6-P). The sequence is that of Putative N-acetylmannosamine-6-phosphate 2-epimerase from Yersinia pseudotuberculosis serotype O:1b (strain IP 31758).